The following is a 117-amino-acid chain: Gamma-aminobutyric acid receptor-associated protein (117 aa).

Residues 1 to 22 (MKFVYKEEHPFEKRRSEGEKIR) are interaction with beta-tubulin. Residues 36 to 68 (APKARIGDLDKKKYLVPSDLTVGQFYFLIRKRI) are interaction with GABRG2. Residues 36–117 (APKARIGDLD…AYSDESVYGL (82 aa)) are interaction with GPHN. Residues 48 to 50 (KYL) form an interaction with LIR (LC3 nteracting Region) motif of ATG3 region. The Phosphatidylethanolamine amidated glycine; alternate moiety is linked to residue G116. G116 carries Phosphatidylserine amidated glycine; alternate lipidation. Residue L117 is a propeptide, removed in mature form.

The protein belongs to the ATG8 family. As to quaternary structure, interacts with GPHN and NSF. Interacts with ATG3, ATG7 and ATG13. Interacts with alpha-tubulin. Interacts with beta-tubulin. Interacts with GABRG2. Interacts with RB1CC1. Interacts with ULK1. Interacts with CALR. Interacts with DDX47. Interacts with TP53INP1 and TP53INP2. Interacts with TBC1D5. Interacts with TBC1D25. Directly interacts with SQSTM1. Interacts with MAPK15. Interacts with TECPR2. Interacts with PCM1. Interacts with TRIM5 and TRIM21. Interacts with MEFV. Interacts with KIF21B. Interacts with WDFY3; this interaction is required for WDFY3 recruitment to MAP1LC3B-positive p62/SQSTM1 bodies. Interacts with FLCN; interaction regulates autophagy. Interacts with UBA5. Interacts with KBTBD6 and KBTBD7; the interaction is direct and required for the ubiquitination of TIAM1. Interacts with reticulophagy regulators RETREG1, RETREG2 and RETREG3. Interacts with IRGM. Interacts with STX17. Interacts with CT55; this interaction may be important for GABARAP protein stability. Interacts with DNM2. Interacts with NCOA4 (via C-terminus). The precursor molecule is cleaved by ATG4 (ATG4A, ATG4B, ATG4C or ATG4D) to expose the glycine at the C-terminus and form the cytosolic form, GABARAP-I. The processed form is then activated by APG7L/ATG7, transferred to ATG3 and conjugated to phosphatidylethanolamine (PE) phospholipid to form the membrane-bound form, GABARAP-II. During non-canonical autophagy, the processed form is conjugated to phosphatidylserine (PS) phospholipid. ATG4 proteins also mediate the delipidation of PE-conjugated forms. In addition, ATG4B and ATG4D mediate delipidation of ATG8 proteins conjugated to PS during non-canonical autophagy. ATG4B constitutes the major protein for proteolytic activation. ATG4D is the main enzyme for delipidation activity. In terms of tissue distribution, expressed in brain (at protein level). Can be found in both somatodendritic and axonal compartment of neurons.

The protein resides in the cytoplasmic vesicle. It localises to the autophagosome membrane. It is found in the endomembrane system. The protein localises to the cytoplasm. Its subcellular location is the cytoskeleton. The protein resides in the golgi apparatus membrane. Its function is as follows. Ubiquitin-like modifier that plays a role in intracellular transport of GABA(A) receptors and its interaction with the cytoskeleton. Involved in autophagy: while LC3s are involved in elongation of the phagophore membrane, the GABARAP/GATE-16 subfamily is essential for a later stage in autophagosome maturation. Through its interaction with the reticulophagy receptor TEX264, participates in the remodeling of subdomains of the endoplasmic reticulum into autophagosomes upon nutrient stress, which then fuse with lysosomes for endoplasmic reticulum turnover. Also required for the local activation of the CUL3(KBTBD6/7) E3 ubiquitin ligase complex, regulating ubiquitination a nd degradation of TIAM1, a guanyl-nucleotide exchange factor (GEF) that activates RAC1 and downstream signal transduction. Thereby, regulates different biological processes including the organization of the cytoskeleton, cell migration and proliferation. Involved in apoptosis. This is Gamma-aminobutyric acid receptor-associated protein from Rattus norvegicus (Rat).